The following is a 183-amino-acid chain: Holliday junction branch migration complex subunit RuvA (183 aa).

The interval 1–64 is domain I; it reads MVVGIEGIIT…EDSNKFYGFL (64 aa). Positions 65–139 are domain II; sequence DKDEQKMFEM…DTRTKLENVS (75 aa). A region of interest (flexible linker) is located at residue Ser139. The tract at residues 139–183 is domain III; it reads SDDKSEALAALLTLGFKQEKIISVLASAQATGTSELIKEALKKLR.

It belongs to the RuvA family. Homotetramer. Forms an RuvA(8)-RuvB(12)-Holliday junction (HJ) complex. HJ DNA is sandwiched between 2 RuvA tetramers; dsDNA enters through RuvA and exits via RuvB. An RuvB hexamer assembles on each DNA strand where it exits the tetramer. Each RuvB hexamer is contacted by two RuvA subunits (via domain III) on 2 adjacent RuvB subunits; this complex drives branch migration. In the full resolvosome a probable DNA-RuvA(4)-RuvB(12)-RuvC(2) complex forms which resolves the HJ.

It is found in the cytoplasm. Its function is as follows. The RuvA-RuvB-RuvC complex processes Holliday junction (HJ) DNA during genetic recombination and DNA repair, while the RuvA-RuvB complex plays an important role in the rescue of blocked DNA replication forks via replication fork reversal (RFR). RuvA specifically binds to HJ cruciform DNA, conferring on it an open structure. The RuvB hexamer acts as an ATP-dependent pump, pulling dsDNA into and through the RuvAB complex. HJ branch migration allows RuvC to scan DNA until it finds its consensus sequence, where it cleaves and resolves the cruciform DNA. This is Holliday junction branch migration complex subunit RuvA from Campylobacter jejuni subsp. doylei (strain ATCC BAA-1458 / RM4099 / 269.97).